Consider the following 170-residue polypeptide: Fibroblast growth factor 2 (170 aa).

Residues 1-21 (VGGRGRGRGTAAAARREPGGA) form a disordered region. Omega-N-methylarginine; alternate is present on residues arginine 4, arginine 6, and arginine 8. Arginine 4, arginine 6, and arginine 8 each carry symmetric dimethylarginine; alternate. Positions 9 to 21 (GTAAAARREPGGA) are enriched in low complexity. Asparagine 51 provides a ligand contact to heparin. At tyrosine 97 the chain carries Phosphotyrosine; by TEC. A Glycyl lysine isopeptide (Lys-Gly) (interchain with G-Cter in SUMO1) cross-link involves residue lysine 110. Residues 143-159 (KRTGQYKLGSKTGPGQK) form a heparin-binding region.

The protein belongs to the heparin-binding growth factors family. In terms of assembly, monomer. Homodimer. Interacts with FGFR1, FGFR2, FGFR3 and FGFR4. Affinity between fibroblast growth factors (FGFs) and their receptors is increased by heparan sulfate glycosaminoglycans that function as coreceptors. Interacts with CSPG4, FGFBP1 and TEC. Found in a complex with FGFBP1, FGF1 and FGF2. Interacts with FGFBP3. Interacts with integrin ITGAV:ITGB3; the interaction is required for FGF2 signaling. Interacts with SNORC (via the extracellular domain). Interacts with glypican GPC3. The N-terminus of isoform 2 is blocked. In terms of processing, phosphorylation at Tyr-97 regulates FGF2 unconventional secretion.

The protein localises to the secreted. It localises to the nucleus. Its function is as follows. Acts as a ligand for FGFR1, FGFR2, FGFR3 and FGFR4. Also acts as an integrin ligand which is required for FGF2 signaling. Binds to integrin ITGAV:ITGB3. Plays an important role in the regulation of cell survival, cell division, cell differentiation and cell migration. Functions as a potent mitogen in vitro. Can induce angiogenesis. Mediates phosphorylation of ERK1/2 and thereby promotes retinal lens fiber differentiation. The chain is Fibroblast growth factor 2 (FGF2) from Cavia porcellus (Guinea pig).